The chain runs to 616 residues: Probable Xaa-Pro aminopeptidase P (616 aa).

Mn(2+)-binding residues include Asp413, Asp424, Glu522, and Glu536.

The protein belongs to the peptidase M24B family. Mn(2+) serves as cofactor.

It catalyses the reaction Release of any N-terminal amino acid, including proline, that is linked to proline, even from a dipeptide or tripeptide.. Catalyzes the removal of a penultimate prolyl residue from the N-termini of peptides. The chain is Probable Xaa-Pro aminopeptidase P (AMPP) from Paracoccidioides brasiliensis (strain Pb18).